The chain runs to 276 residues: NADPH-dependent 7-cyano-7-deazaguanine reductase (276 aa).

Substrate is bound at residue 80–82 (VES). NADPH is bound at residue 82 to 83 (SK). Residue Cys-183 is the Thioimide intermediate of the active site. Asp-190 (proton donor) is an active-site residue. 222 to 223 (HE) provides a ligand contact to substrate. An NADPH-binding site is contributed by 251–252 (RG).

It belongs to the GTP cyclohydrolase I family. QueF type 2 subfamily. In terms of assembly, homodimer.

The protein localises to the cytoplasm. It carries out the reaction 7-aminomethyl-7-carbaguanine + 2 NADP(+) = 7-cyano-7-deazaguanine + 2 NADPH + 3 H(+). The protein operates within tRNA modification; tRNA-queuosine biosynthesis. Catalyzes the NADPH-dependent reduction of 7-cyano-7-deazaguanine (preQ0) to 7-aminomethyl-7-deazaguanine (preQ1). The chain is NADPH-dependent 7-cyano-7-deazaguanine reductase from Burkholderia cenocepacia (strain HI2424).